Reading from the N-terminus, the 54-residue chain is Large ribosomal subunit protein bL33 (54 aa).

Belongs to the bacterial ribosomal protein bL33 family.

This is Large ribosomal subunit protein bL33 from Stenotrophomonas maltophilia (strain K279a).